We begin with the raw amino-acid sequence, 77 residues long: Cysteine-rich protein 1 (77 aa).

The LIM zinc-binding domain maps to 2–63; sequence PKCPKCDKEV…HPCYSAMFGP (62 aa). 2 positions are modified to N6-acetyllysine: Lys-9 and Lys-22. At Arg-68 the chain carries Omega-N-methylarginine.

Functionally, seems to have a role in zinc absorption and may function as an intracellular zinc transport protein. The chain is Cysteine-rich protein 1 (Crip1) from Mus musculus (Mouse).